The primary structure comprises 1043 residues: Constitutive coactivator of PPAR-gamma-like protein 1 homolog (1043 aa).

Disordered regions lie at residues 353–497 (SMVP…HMQI) and 929–1043 (YGRG…NKEE). 2 stretches are compositionally biased toward polar residues: residues 362–375 (QMLN…QSRP) and 405–419 (SPIN…NHVD). Composition is skewed to basic and acidic residues over residues 451 to 471 (TWDK…EQAK) and 951 to 964 (EVAK…EDSK). Positions 801 to 1043 (VELATKVEKM…LEGAVANKEE (243 aa)) are RNA binding. The segment covering 995–1010 (EARASSNSESALSSDS) has biased composition (low complexity).

Belongs to the constitutive coactivator of PPAR-gamma family.

The protein localises to the cytoplasm. Its subcellular location is the cell membrane. May bee involved in the oxidative stress-induced survival signaling. Binds RNA. May participate in mRNA transport in the cytoplasm. The sequence is that of Constitutive coactivator of PPAR-gamma-like protein 1 homolog (fam120a) from Xenopus tropicalis (Western clawed frog).